A 71-amino-acid chain; its full sequence is SPbeta prophage-derived uncharacterized protein YopF (71 aa).

The sequence is that of SPbeta prophage-derived uncharacterized protein YopF (yopF) from Bacillus subtilis (strain 168).